A 338-amino-acid chain; its full sequence is MTDYTTDIAVIGAGPVGIFTVFQAGMLKMQCCVIDALTEVGGQCTALYPEKPIYDIPGYPIVSGKELIDNLKKQSEPFNPQYLLGQIAEKIEDYSDYFLIRTSKGIVIQSKVIVIAAGAGAFGPNRPPIDNILDYENKSVFYQVKNISDFHNKNIMIAGGGDSAADWAVELSKIASQLYIVHRRRNFRCAPNTALQIDNLSQNGKINVIVPYQIKKLLGEEGKLHSVVVQNITNHEEITLQVDYLFPFFGTSANLGSMLNWGIEIKGYQMTVDFETCRTSRDRIYAVGDIATYPGKVKLILTGFSEAAMACHHIYHIVYPNSPLNFQYSTSKGIPNKN.

FAD contacts are provided by D35, Q43, Y48, A88, F122, D289, and T330.

This sequence belongs to the ferredoxin--NADP reductase type 2 family. In terms of assembly, homodimer. FAD is required as a cofactor.

The enzyme catalyses 2 reduced [2Fe-2S]-[ferredoxin] + NADP(+) + H(+) = 2 oxidized [2Fe-2S]-[ferredoxin] + NADPH. The chain is Ferredoxin--NADP reductase from Ehrlichia canis (strain Jake).